The chain runs to 210 residues: Shikimate kinase (210 aa).

34–39 (GAGKSV) is a binding site for ATP. Residue serine 38 participates in Mg(2+) binding. Substrate contacts are provided by aspartate 56, arginine 80, and glycine 102. Residue arginine 140 coordinates ATP. Residue arginine 159 participates in substrate binding.

It belongs to the shikimate kinase family. Monomer. Requires Mg(2+) as cofactor.

The protein resides in the cytoplasm. It catalyses the reaction shikimate + ATP = 3-phosphoshikimate + ADP + H(+). Its pathway is metabolic intermediate biosynthesis; chorismate biosynthesis; chorismate from D-erythrose 4-phosphate and phosphoenolpyruvate: step 5/7. In terms of biological role, catalyzes the specific phosphorylation of the 3-hydroxyl group of shikimic acid using ATP as a cosubstrate. The protein is Shikimate kinase of Bartonella quintana (strain Toulouse) (Rochalimaea quintana).